The sequence spans 188 residues: ATP-dependent Clp protease proteolytic subunit 1 (188 aa).

The active-site Nucleophile is S90. H115 is a catalytic residue.

It belongs to the peptidase S14 family. As to quaternary structure, fourteen ClpP subunits assemble into 2 heptameric rings which stack back to back to give a disk-like structure with a central cavity, resembling the structure of eukaryotic proteasomes.

It is found in the cytoplasm. The catalysed reaction is Hydrolysis of proteins to small peptides in the presence of ATP and magnesium. alpha-casein is the usual test substrate. In the absence of ATP, only oligopeptides shorter than five residues are hydrolyzed (such as succinyl-Leu-Tyr-|-NHMec, and Leu-Tyr-Leu-|-Tyr-Trp, in which cleavage of the -Tyr-|-Leu- and -Tyr-|-Trp bonds also occurs).. Cleaves peptides in various proteins in a process that requires ATP hydrolysis. Has a chymotrypsin-like activity. Plays a major role in the degradation of misfolded proteins. In Corynebacterium jeikeium (strain K411), this protein is ATP-dependent Clp protease proteolytic subunit 1.